A 236-amino-acid chain; its full sequence is Purine nucleoside phosphorylase DeoD-type (236 aa).

His-5 contributes to the a purine D-ribonucleoside binding site. Phosphate is bound by residues Gly-21, Arg-25, Arg-44, and Arg-88–Ser-91. Residues Asp-180–Glu-182 and Ser-204–Asp-205 each bind a purine D-ribonucleoside. Asp-205 acts as the Proton donor in catalysis.

This sequence belongs to the PNP/UDP phosphorylase family. In terms of assembly, homohexamer; trimer of homodimers.

It carries out the reaction a purine D-ribonucleoside + phosphate = a purine nucleobase + alpha-D-ribose 1-phosphate. The enzyme catalyses a purine 2'-deoxy-D-ribonucleoside + phosphate = a purine nucleobase + 2-deoxy-alpha-D-ribose 1-phosphate. Its function is as follows. Catalyzes the reversible phosphorolytic breakdown of the N-glycosidic bond in the beta-(deoxy)ribonucleoside molecules, with the formation of the corresponding free purine bases and pentose-1-phosphate. The polypeptide is Purine nucleoside phosphorylase DeoD-type (Aliivibrio salmonicida (strain LFI1238) (Vibrio salmonicida (strain LFI1238))).